The sequence spans 154 residues: UPF0178 protein GM21_2006 (154 aa).

It belongs to the UPF0178 family.

The sequence is that of UPF0178 protein GM21_2006 from Geobacter sp. (strain M21).